We begin with the raw amino-acid sequence, 367 residues long: uncharacterized protein (367 aa).

Residues 6–26 (IAAGVVVALAAVWCTSAWFTG) traverse the membrane as a helical segment.

It to E.coli YdgA and YihF.

It is found in the membrane. This is an uncharacterized protein from Haemophilus influenzae (strain ATCC 51907 / DSM 11121 / KW20 / Rd).